A 202-amino-acid chain; its full sequence is Josephin-1 (202 aa).

S15 is modified (phosphoserine). The Josephin domain occupies 23-202 (PPQIYHEKQR…EAHQSWRTDV (180 aa)). The active-site Nucleophile is the C36. H139 (proton acceptor) is an active-site residue.

Interacts with beta-actin/ACTB. Post-translationally, monoubiquitinated. Ubiquitination activates deubiquitination activity in vitro.

It is found in the cell membrane. The protein localises to the cytoplasm. The catalysed reaction is Thiol-dependent hydrolysis of ester, thioester, amide, peptide and isopeptide bonds formed by the C-terminal Gly of ubiquitin (a 76-residue protein attached to proteins as an intracellular targeting signal).. Its function is as follows. Deubiquitinates monoubiquitinated probes (in vitro). When ubiquitinated, cleaves 'Lys-63'-linked and 'Lys-48'-linked poly-ubiquitin chains (in vitro), hence may act as a deubiquitinating enzyme. May increase macropinocytosis and suppress clathrin- and caveolae-mediated endocytosis. May enhance membrane dynamics and cell motility independently of its catalytic activity. This Pongo abelii (Sumatran orangutan) protein is Josephin-1 (JOSD1).